We begin with the raw amino-acid sequence, 143 residues long: Peptide methionine sulfoxide reductase MsrB (143 aa).

The MsrB domain occupies 16 to 139 (DAELRRRLTP…NSAALNFESR (124 aa)). The Zn(2+) site is built by Cys-55, Cys-58, Cys-104, and Cys-107. Residue Cys-128 is the Nucleophile of the active site.

The protein belongs to the MsrB Met sulfoxide reductase family. Requires Zn(2+) as cofactor.

It catalyses the reaction L-methionyl-[protein] + [thioredoxin]-disulfide + H2O = L-methionyl-(R)-S-oxide-[protein] + [thioredoxin]-dithiol. This chain is Peptide methionine sulfoxide reductase MsrB, found in Burkholderia orbicola (strain MC0-3).